We begin with the raw amino-acid sequence, 87 residues long: Insulin-related peptide 1 (87 aa).

An N-terminal signal peptide occupies residues 1-19; sequence MKSFMVFVLIFACFSCYYA. Residues 20–44 constitute a propeptide that is removed on maturation; that stretch reads QESTNFYCGRTLSRALAVLCYGAES. The residue at position 64 (R64) is an Arginine amide. Residues 68–87 constitute a propeptide that is removed on maturation; the sequence is GPVDECCEKACSIQELMTYC.

Belongs to the insulin family. DAGWWIPQHGHHALAGVR-amide: Expressed in corpora cardiaca (CC), corpora allata (CA), antennal lobe (AL) and gnathal ganglion (GNG) (at protein level). Expression in CC and CA detected in most animals, in AL and GNG in few animals (at protein level).

The protein resides in the secreted. This chain is Insulin-related peptide 1, found in Agrotis ipsilon (Black cutworm moth).